The primary structure comprises 1400 residues: DNA-directed RNA polymerase subunit beta' (1400 aa).

Residues Cys-71, Cys-73, Cys-86, and Cys-89 each contribute to the Zn(2+) site. Positions 462, 464, and 466 each coordinate Mg(2+). Zn(2+) contacts are provided by Cys-810, Cys-884, Cys-891, and Cys-894.

The protein belongs to the RNA polymerase beta' chain family. The RNAP catalytic core consists of 2 alpha, 1 beta, 1 beta' and 1 omega subunit. When a sigma factor is associated with the core the holoenzyme is formed, which can initiate transcription. Requires Mg(2+) as cofactor. Zn(2+) serves as cofactor.

The catalysed reaction is RNA(n) + a ribonucleoside 5'-triphosphate = RNA(n+1) + diphosphate. Its function is as follows. DNA-dependent RNA polymerase catalyzes the transcription of DNA into RNA using the four ribonucleoside triphosphates as substrates. The protein is DNA-directed RNA polymerase subunit beta' of Rhodopseudomonas palustris (strain BisA53).